We begin with the raw amino-acid sequence, 726 residues long: Long-chain-alcohol oxidase FAO4A (726 aa).

A helical transmembrane segment spans residues 103–119 (ILLNWSSSYFSLLRMLF). 224–239 (CDAVVVGSGSGGGVAA) contributes to the FAD binding site. The active-site Proton acceptor is His659.

The protein belongs to the GMC oxidoreductase family.

The protein localises to the membrane. It catalyses the reaction a long-chain primary fatty alcohol + O2 = a long-chain fatty aldehyde + H2O2. In terms of biological role, long-chain fatty alcohol oxidase involved in the omega-oxidation pathway of lipid degradation. The protein is Long-chain-alcohol oxidase FAO4A (FAO4A) of Arabidopsis thaliana (Mouse-ear cress).